The chain runs to 258 residues: MKEILITNDDGYESEGLKKLIKMLTKEFKAKITIVAPASEKSACSHSITLTKPLRFVKVGKRFYKLDDGTPADCVYLALHALYKKRLPDLVISGINKGANVGEDITYSGTCAGAMEAVLQGIPAIALSQFYKKSEKELDYKNALQITKKIIQNIFDKGFPLEKKEFLNINFPAKSKIKGIKICKAGKRVYNFEAHSNVNPRGVEYYWLAAANLDFEDEKNSDIALLKKGYATITPIMLDLTAYEKMKKVKKWLKANDE.

Positions 9, 10, 42, and 96 each coordinate a divalent metal cation.

Belongs to the SurE nucleotidase family. Requires a divalent metal cation as cofactor.

The protein resides in the cytoplasm. The enzyme catalyses a ribonucleoside 5'-phosphate + H2O = a ribonucleoside + phosphate. Nucleotidase that shows phosphatase activity on nucleoside 5'-monophosphates. In Campylobacter jejuni subsp. jejuni serotype O:6 (strain 81116 / NCTC 11828), this protein is 5'-nucleotidase SurE.